Reading from the N-terminus, the 418-residue chain is MNLTTMGQAAKAAAFDLAVAPTAQKNKALAIIADELEANKDAILAANEKDIKAAVEAGISEAMQDRLLLTEERLVGIANDVRNVINLNDPVGSEIDSKVLENGMSLSRRRVPIGVIGVIYEARPNVTIDIASLCLKTGNASILRGGKETFFSNMELVKVIQVALEKAGLPAASVQYIEKPDRELVSQLLTMDDYVDMIIPRGGAGLHKMCKENSSIPVIIGGFGISHAFVDESADLERALVVVDNSKAQRPSACNALDTLLVHEAVAPQFLALLVNNMAGRVELVAEPKAYGLLKEFEGVSLREAQEGDFDTEWLSYTLGVKVVADVNEAAAHMQKHNASHSDTILTNNIESAEKFINTAGSAAVYVNASTRFTDGAQFGLGAEVAVSTQKLHARGPMGLEELTSYKWVGKADYLIRS.

Belongs to the gamma-glutamyl phosphate reductase family.

The protein resides in the cytoplasm. It catalyses the reaction L-glutamate 5-semialdehyde + phosphate + NADP(+) = L-glutamyl 5-phosphate + NADPH + H(+). It functions in the pathway amino-acid biosynthesis; L-proline biosynthesis; L-glutamate 5-semialdehyde from L-glutamate: step 2/2. Its function is as follows. Catalyzes the NADPH-dependent reduction of L-glutamate 5-phosphate into L-glutamate 5-semialdehyde and phosphate. The product spontaneously undergoes cyclization to form 1-pyrroline-5-carboxylate. The sequence is that of Gamma-glutamyl phosphate reductase from Aliivibrio fischeri (strain MJ11) (Vibrio fischeri).